The chain runs to 1442 residues: Protein patched homolog 1 (1442 aa).

Positions 1 to 45 are disordered; the sequence is MASAADALEPESGSSTAGGGSHPVRAARSARGRRRRSGGTRRAAA. At 1-101 the chain is on the cytoplasmic side; it reads MASAADALEP…GCYIQKNCGK (101 aa). Basic residues predominate over residues 28–39; it reads RSARGRRRRSGG. A helical membrane pass occupies residues 102-122; that stretch reads FLVVGLLYSAFAVGLRAANLE. Residues 123–436 lie on the Extracellular side of the membrane; sequence TNVEELWVEV…LDDILKSFSD (314 aa). Residues asparagine 141, asparagine 312, asparagine 349, and asparagine 414 are each glycosylated (N-linked (GlcNAc...) asparagine). The chain crosses the membrane as a helical span at residues 437 to 457; it reads VSVIRVASGYLLMLAYACLTM. Positions 438-598 constitute an SSD domain; that stretch reads SVIRVASGYL…LLIFPAILSM (161 aa). Residues 458–472 lie on the Cytoplasmic side of the membrane; the sequence is LRWDCAKSQGAVGLA. A helical transmembrane segment spans residues 473-493; that stretch reads GVLLVALSVAAGLGLCSLIGI. Residues 494–501 are Extracellular-facing; it reads SFNAATTQ. A helical transmembrane segment spans residues 502–522; it reads VLPFLALGVGVDDVFLLAHAF. At 523-547 the chain is on the cytoplasmic side; sequence SETGQNKRIPFEDRTGECLKRTGAS. Residues 548–568 form a helical membrane-spanning segment; the sequence is VALTSISNVTAFFMAALIPIP. Topologically, residues 569-577 are extracellular; it reads ALRAFSLQA. Residues 578 to 598 traverse the membrane as a helical segment; it reads AVVVVFNFAMVLLIFPAILSM. The Cytoplasmic portion of the chain corresponds to 599 to 747; sequence DLYRREDRRL…HYAPFLLKPK (149 aa). Residues 748-768 traverse the membrane as a helical segment; the sequence is AKVVVIFLFLGLLGLSLYGTT. The Extracellular portion of the chain corresponds to 769–1026; sequence RVRDGLDLTD…WEQYIGLRHW (258 aa). Asparagine 827, asparagine 874, and asparagine 999 each carry an N-linked (GlcNAc...) asparagine glycan. A helical membrane pass occupies residues 1027–1047; the sequence is LLLSISVVLACTFLVCALFLL. At 1048-1053 the chain is on the cytoplasmic side; sequence NPWTAG. The chain crosses the membrane as a helical span at residues 1054–1074; it reads IIVVVLALMTVELFGMMGLIG. The Extracellular segment spans residues 1075–1082; it reads IKLSAVPV. The helical transmembrane segment at 1083–1101 threads the bilayer; sequence VILIASVGIGVEFTVHIAL. Residues 1102 to 1120 lie on the Cytoplasmic side of the membrane; that stretch reads AFLTAIGDKNRRAVLALEH. The chain crosses the membrane as a helical span at residues 1121–1141; sequence MFAPVLDGAVSTLLGVLMLAG. At 1142–1153 the chain is on the extracellular side; sequence SEFDFIVRYFFA. A helical membrane pass occupies residues 1154–1174; it reads VLAILTILGVLNGLVLLPVLL. Residues 1175–1442 are Cytoplasmic-facing; sequence SFFGPYPEVS…EERTAGKISE (268 aa). Disordered stretches follow at residues 1188-1231 and 1266-1338; these read GRNR…TTVS and STVV…LNHK. A compositionally biased stretch (low complexity) spans 1217-1226; sequence SDSSDSEYSS. Residues 1276-1293 are compositionally biased toward polar residues; that stretch reads QSSPRLQSNPEAGTQQVW.

The protein belongs to the patched family. In terms of processing, glycosylation is necessary for SHH binding. In terms of tissue distribution, expression is seen in the embryonic neural tube, sclerotome, visceral mesoderm, and limb bud.

It is found in the membrane. Acts as a receptor for sonic hedgehog (SHH), indian hedgehog (IHH) and desert hedgehog (DHH). Associates with the smoothened protein (SMO) to transduce the hedgehog's proteins signal. In Gallus gallus (Chicken), this protein is Protein patched homolog 1 (PTCH1).